Here is a 95-residue protein sequence, read N- to C-terminus: uncharacterized protein (95 aa).

This is an uncharacterized protein from Schizosaccharomyces pombe (strain 972 / ATCC 24843) (Fission yeast).